A 222-amino-acid polypeptide reads, in one-letter code: THAP domain-containing protein 6 (222 aa).

A THAP-type zinc finger spans residues Met-1–Phe-89. An HCFC1-binding motif (HBM) motif is present at residues Glu-139–Tyr-142. Residues Lys-149–Cys-194 are a coiled coil.

The sequence is that of THAP domain-containing protein 6 (THAP6) from Homo sapiens (Human).